The sequence spans 803 residues: MASLPHCLSARPLVVAAAPGRPGPGPGPWLRGGARRRNAAFSAGNAGRRVGLRRSVASAVEVGVGEDEEEGVEEEEEEVEAVVMPERYALGGACRVLAGMPAPLGATALDGGVNFAVYSAGASAASLCLFTPDDLEADEVTEEVPLDPLFNRTGNVWHVFIEGELHNMLYGYRFDGMFAPHCGQYFDVSNVVVDPYAKAVISRGEYGVPGPGGDCWPQMAGMIPLPYSTFDWQGDLPLRYPQKDLVIYEMHLRGFTKHSSSNVEHPGTYIGAISKLDYLKELGVNCVELMPCHEFNELEYFSCSSKMNFWGYSTINFFSPMIRYSSGGIRNCGRDAINEFKTFVREAHKRGIEVIMDVVFNHTAEGNEKGPILSFRGIDNSTYYMLAPKGEFYNYSGCGNTFNCNHPVVREFIVDCLRYWVTEMHVDGFRFDLASIMTRGCSLWDPVNVYGSPVEGDMTTTGTPLATPPLIDMISNDPILGDVKLIAEAWDAGGLYQVGQFPHWKIWSEWNGKYRDIVRQFIKGTDGFAGGFAECLCGSPHLYQAGGRKPWHSINFVCAHDGFTLADLVTYNKKYNSSNGEDNRDGENHNLSWNCGEEGEFAGLSVKRLRKRQMRNFFVSLMVSQGVPMFYMGDEYGHTKGGNNNTYCHDHYVNYFRWDKKEESSDLQRFCSLMTKFRKQCESLGLADFPTAQRLHWHGHQPGKPDWSETSRFVAFSTKDETKGEIYVAFNASHLPAVVGLPERPGYRWEPLVDTGKPAPYDFLTDDLPDRAHAVHLFSHFLNSNLYPMLSYSSIILELQPDD.

A chloroplast-targeting transit peptide spans 1–54; it reads MASLPHCLSARPLVVAAAPGRPGPGPGPWLRGGARRRNAAFSAGNAGRRVGLRR. Asp432 (nucleophile) is an active-site residue. Catalysis depends on Glu488, which acts as the Proton donor.

The protein belongs to the glycosyl hydrolase 13 family. As to quaternary structure, forms a homo-pentamer and a hetero-hexamer composed of five ISA1 and one ISA2. Interacts with FLO6/SIP4. Highly expressed in developing endosperm. Expressed at low levels in leaves.

The protein localises to the plastid. It localises to the chloroplast. The enzyme catalyses Hydrolysis of (1-&gt;6)-alpha-D-glucosidic branch linkages in glycogen, amylopectin and their beta-limit dextrins.. It participates in glycan biosynthesis; starch biosynthesis. Inhibited by copper chloride, mercury chloride, ammonium molybdate and para-chloromercuribenzoate. Functionally, starch-debranching enzyme involved in amylopectin biosynthesis in endosperm. Functions by removing excess branches or improper branches that interfere with the formation of double helices of the cluster chains of amylopectin and crystallization of starch. Works as ISA1 homooligomer or together with ISA2 as heterooligomer. The heterooligomer ISA1 and ISA2 possesses higher affinity than the ISA1 homooligomer for various branched polyglucans in vitro, but no marked differences exist in chain preferences for debranching of amylopectin and phytoglycogen between these forms. The polypeptide is Isoamylase 1, chloroplastic (Oryza sativa subsp. japonica (Rice)).